Here is a 287-residue protein sequence, read N- to C-terminus: Toxin zeta (287 aa).

40-47 (GQPGSGKT) is an ATP binding site. Asn-66 provides a ligand contact to substrate. Residue Asp-67 is the Proton acceptor of the active site. Positions 100, 118, 120, and 128 each coordinate substrate. The tract at residues 267–287 (KLESLQPPTPPIPKTPKLPGI) is disordered. Pro residues predominate over residues 273-287 (PPTPPIPKTPKLPGI).

It belongs to the zeta toxin family. In the presence of the epsilon antitoxin forms an inactive PezA(2)PezT(2) heterotetramer. The heterotetramer is still able to bind the UNAG substrate.

It carries out the reaction UDP-N-acetyl-alpha-D-glucosamine + ATP = UDP-N-acetyl-alpha-D-glucosamine 3'-phosphate + ADP + H(+). Functionally, toxic component of a type II toxin-antitoxin (TA) system. Phosphorylates UDP-N-acetyl-D-glucosamine (UNAG) on the 3'-hydroxyl group of the N-acetyl-D-glucosamine moiety, yielding UNAG-3P. UNAG-3P inhibits MurA, the first committed step in cell wall synthesis, which is then blocked. Phosphorylation is inhibited by cognate epsilon antitoxin. Part of a postsegregational killing (PSK) system involved in the killing of plasmid-free cells. The zeta toxin induces programmed cell death. The chain is Toxin zeta from Streptococcus pyogenes.